The chain runs to 325 residues: Fructose-1,6-bisphosphatase class 1 (325 aa).

Mg(2+) is bound by residues glutamate 84, aspartate 103, leucine 105, and aspartate 106. Substrate contacts are provided by residues 106–109 (DGSS), asparagine 196, and lysine 262. Residue glutamate 268 coordinates Mg(2+).

Belongs to the FBPase class 1 family. In terms of assembly, homotetramer. The cofactor is Mg(2+).

Its subcellular location is the cytoplasm. The enzyme catalyses beta-D-fructose 1,6-bisphosphate + H2O = beta-D-fructose 6-phosphate + phosphate. It functions in the pathway carbohydrate biosynthesis; gluconeogenesis. In Shewanella baltica (strain OS195), this protein is Fructose-1,6-bisphosphatase class 1.